The sequence spans 299 residues: Protease HtpX homolog (299 aa).

2 consecutive transmembrane segments (helical) span residues 15-35 (ILLL…GYLF) and 39-59 (GLGG…SMIF). H143 is a binding site for Zn(2+). E144 is an active-site residue. H147 is a binding site for Zn(2+). The next 2 helical transmembrane spans lie at 158-178 (IAVA…RMMW) and 198-218 (IIML…ATLV). E227 serves as a coordination point for Zn(2+).

The protein belongs to the peptidase M48B family. Zn(2+) is required as a cofactor.

The protein localises to the cell membrane. The chain is Protease HtpX homolog from Streptococcus pneumoniae serotype 19F (strain G54).